The following is a 510-amino-acid chain: Maturase K (510 aa).

This sequence belongs to the intron maturase 2 family. MatK subfamily.

It is found in the plastid. Its function is as follows. Usually encoded in the trnK tRNA gene intron. Probably assists in splicing its own and other chloroplast group II introns. This chain is Maturase K, found in Aneura mirabilis (Parasitic liverwort).